The chain runs to 380 residues: Probable inactive reductase easA (380 aa).

FMN is bound by residues P25–T27, A60, Q102, and H171. Substrate-binding residues include H171 and N174. Residues K223, G299, G324–R325, and R325 contribute to the FMN site. A substrate-binding site is contributed by Y352.

Belongs to the NADH:flavin oxidoreductase/NADH oxidase family.

In terms of biological role, probable inactive dehydrogenase; part of the gene cluster that mediates the biosynthesis of fungal ergot alkaloid ergovaline, the predominant ergopeptine product in E.festucae var. lolii. DmaW catalyzes the first step of ergot alkaloid biosynthesis by condensing dimethylallyl diphosphate (DMAP) and tryptophan to form 4-dimethylallyl-L-tryptophan. The second step is catalyzed by the methyltransferase easF that methylates 4-dimethylallyl-L-tryptophan in the presence of S-adenosyl-L-methionine, resulting in the formation of 4-dimethylallyl-L-abrine. The catalase easC and the FAD-dependent oxidoreductase easE then transform 4-dimethylallyl-L-abrine to chanoclavine-I which is further oxidized by easD in the presence of NAD(+), resulting in the formation of chanoclavine-I aldehyde. Agroclavine dehydrogenase easG then mediates the conversion of chanoclavine-I aldehyde to agroclavine via a non-enzymatic adduct reaction: the substrate is an iminium intermediate that is formed spontaneously from chanoclavine-I aldehyde in the presence of glutathione. The presence of easA is not required to complete this reaction. Further conversion of agroclavine to paspalic acid is a two-step process involving oxidation of agroclavine to elymoclavine and of elymoclavine to paspalic acid, the second step being performed by the elymoclavine oxidase cloA. Paspalic acid is then further converted to D-lysergic acid. Ergovaline is assembled from D-lysergic acid and three different amino acids by the D-lysergyl-peptide-synthetase composed of a monomudular (lpsB) and a trimodular (lpsA) nonribosomal peptide synthetase subunit. This Epichloe festucae var. lolii (Neotyphodium lolii) protein is Probable inactive reductase easA.